The following is a 154-amino-acid chain: Small ribosomal subunit protein uS15 (154 aa).

Basic residues predominate over residues 1-11 (MSRLHAHKRYH). The segment at 1 to 24 (MSRLHAHKRYHGQSGSKRPLRTTK) is disordered.

Belongs to the universal ribosomal protein uS15 family. In terms of assembly, part of the 30S ribosomal subunit.

The polypeptide is Small ribosomal subunit protein uS15 (Nanoarchaeum equitans (strain Kin4-M)).